A 147-amino-acid polypeptide reads, in one-letter code: UPF0306 protein KPK_0562 (147 aa).

Belongs to the UPF0306 family.

The sequence is that of UPF0306 protein KPK_0562 from Klebsiella pneumoniae (strain 342).